The chain runs to 316 residues: Protoheme IX farnesyltransferase (316 aa).

9 consecutive transmembrane segments (helical) span residues 32–52, 53–73, 93–113, 116–136, 152–172, 180–200, 226–246, 248–268, and 289–309; these read VMSL…GQIN, PVLG…SGAL, IPAG…LSCF, AILG…TIFF, NIVI…ACVT, TVLF…LALF, IVAY…LGFA, FAYG…SIAV, and IFYL…AMLV.

Belongs to the UbiA prenyltransferase family. Protoheme IX farnesyltransferase subfamily.

The protein resides in the cell inner membrane. The enzyme catalyses heme b + (2E,6E)-farnesyl diphosphate + H2O = Fe(II)-heme o + diphosphate. Its pathway is porphyrin-containing compound metabolism; heme O biosynthesis; heme O from protoheme: step 1/1. In terms of biological role, converts heme B (protoheme IX) to heme O by substitution of the vinyl group on carbon 2 of heme B porphyrin ring with a hydroxyethyl farnesyl side group. The protein is Protoheme IX farnesyltransferase of Rhizobium etli (strain CIAT 652).